Consider the following 102-residue polypeptide: COX assembly mitochondrial protein 2 homolog (102 aa).

The region spanning 11 to 55 is the CHCH domain; the sequence is TKECNMLIEFLQRCHSEKPIGKMIGKCSYWDEAVWQCTKKERIWR. 2 consecutive short sequence motifs (cx9C motif) follow at residues 14–24 and 37–47; these read CNMLIEFLQRC and CSYWDEAVWQC. 2 disulfides stabilise this stretch: Cys-14-Cys-47 and Cys-24-Cys-37.

The protein belongs to the CMC family.

The protein resides in the mitochondrion. May be involved in cytochrome c oxidase biogenesis. The sequence is that of COX assembly mitochondrial protein 2 homolog from Caenorhabditis elegans.